A 199-amino-acid polypeptide reads, in one-letter code: ATP synthase subunit a (199 aa).

A run of 6 helical transmembrane segments spans residues 2–22 (TNVYFLDIFMFVYVLQFLFYF), 25–45 (SMLGVLVNKFLGLLVVVFSYT), 53–73 (VISVFTFLVLLTCCFGGYFMY), 80–100 (MIEFTFVYAMVAWLSTLLTFI), 143–163 (VNVLVGHVISMMLYQLLELYL), and 164–184 (GIFYVWIVVLAIVMECFVFFI).

This sequence belongs to the ATPase A chain family. As to quaternary structure, F-type ATPases have 2 components, CF(1) - the catalytic core - and CF(0) - the membrane proton channel. CF(1) has five subunits: alpha(3), beta(3), gamma(1), delta(1), epsilon(1). CF(0) has three main subunits: a, b and c.

The protein localises to the mitochondrion inner membrane. Mitochondrial membrane ATP synthase (F(1)F(0) ATP synthase or Complex V) produces ATP from ADP in the presence of a proton gradient across the membrane which is generated by electron transport complexes of the respiratory chain. F-type ATPases consist of two structural domains, F(1) - containing the extramembraneous catalytic core and F(0) - containing the membrane proton channel, linked together by a central stalk and a peripheral stalk. During catalysis, ATP synthesis in the catalytic domain of F(1) is coupled via a rotary mechanism of the central stalk subunits to proton translocation. Key component of the proton channel; it may play a direct role in the translocation of protons across the membrane. The chain is ATP synthase subunit a (ATP6) from Ascaris suum (Pig roundworm).